We begin with the raw amino-acid sequence, 283 residues long: Cyclin-C (283 aa).

The Cyclin N-terminal domain maps to 46–144; that stretch reads NVIQALGEHL…VLECEFYLLE (99 aa). The disordered stretch occupies residues 252–283; sequence TILSKMPKPKPPPNSEGEQGPNGSQNSSYSQS. The span at 272 to 283 shows a compositional bias: polar residues; that stretch reads PNGSQNSSYSQS. Phosphoserine is present on Ser-275.

Belongs to the cyclin family. Cyclin C subfamily. Component of the Mediator complex, which is composed of MED1, MED4, MED6, MED7, MED8, MED9, MED10, MED11, MED12, MED13, MED13L, MED14, MED15, MED16, MED17, MED18, MED19, MED20, MED21, MED22, MED23, MED24, MED25, MED26, MED27, MED29, MED30, MED31, CCNC, CDK8 and CDC2L6/CDK11. The MED12, MED13, CCNC and CDK8 subunits form a distinct module termed the CDK8 module. Mediator containing the CDK8 module is less active than Mediator lacking this module in supporting transcriptional activation. Individual preparations of the Mediator complex lacking one or more distinct subunits have been variously termed ARC, CRSP, DRIP, PC2, SMCC and TRAP. The cylin/CDK pair formed by CCNC/CDK8 also associates with the large subunit of RNA polymerase II.

The protein resides in the nucleus. Its function is as follows. Component of the Mediator complex, a coactivator involved in regulated gene transcription of nearly all RNA polymerase II-dependent genes. Mediator functions as a bridge to convey information from gene-specific regulatory proteins to the basal RNA polymerase II transcription machinery. Mediator is recruited to promoters by direct interactions with regulatory proteins and serves as a scaffold for the assembly of a functional preinitiation complex with RNA polymerase II and the general transcription factors. Binds to and activates cyclin-dependent kinase CDK8 that phosphorylates the CTD (C-terminal domain) of the large subunit of RNA polymerase II (RNAp II), which may inhibit the formation of a transcription initiation complex. This is Cyclin-C (CCNC) from Bos taurus (Bovine).